A 210-amino-acid chain; its full sequence is Thymidylate kinase (210 aa).

An ATP-binding site is contributed by G10 to S17.

The protein belongs to the thymidylate kinase family.

The catalysed reaction is dTMP + ATP = dTDP + ADP. In terms of biological role, phosphorylation of dTMP to form dTDP in both de novo and salvage pathways of dTTP synthesis. The polypeptide is Thymidylate kinase (Pseudomonas putida (strain ATCC 700007 / DSM 6899 / JCM 31910 / BCRC 17059 / LMG 24140 / F1)).